A 617-amino-acid chain; its full sequence is UvrABC system protein C (617 aa).

A GIY-YIG domain is found at 22–100 (KLPGVYRFFD…IKALSPKYNI (79 aa)). One can recognise a UVR domain in the interval 209–244 (DELTRTLQHKMQTAAANLQFEEAARYRDQIQALGIM).

This sequence belongs to the UvrC family. As to quaternary structure, interacts with UvrB in an incision complex.

It localises to the cytoplasm. The UvrABC repair system catalyzes the recognition and processing of DNA lesions. UvrC both incises the 5' and 3' sides of the lesion. The N-terminal half is responsible for the 3' incision and the C-terminal half is responsible for the 5' incision. The polypeptide is UvrABC system protein C (Neisseria meningitidis serogroup A / serotype 4A (strain DSM 15465 / Z2491)).